A 103-amino-acid polypeptide reads, in one-letter code: Large ribosomal subunit protein bL21 (103 aa).

Belongs to the bacterial ribosomal protein bL21 family. As to quaternary structure, part of the 50S ribosomal subunit. Contacts protein L20.

This protein binds to 23S rRNA in the presence of protein L20. The protein is Large ribosomal subunit protein bL21 of Psychrobacter arcticus (strain DSM 17307 / VKM B-2377 / 273-4).